Consider the following 355-residue polypeptide: Agamous-like MADS-box protein AGL81 (355 aa).

Residues 1 to 22 form a disordered region; that stretch reads MAIRSLPSSSRCSSSSSSSSYS. The 43-residue stretch at 26-68 folds into the MADS-box domain; it reads TSLSNRLETIFKKASELCTLCDIEACVIYYGPDGELKTWPPER. Over residues 162–174 the composition is skewed to basic and acidic residues; that stretch reads VESQKHKETKPDH. A disordered region spans residues 162 to 186; sequence VESQKHKETKPDHQSLASSSLNHQT. Polar residues predominate over residues 176–186; sequence SLASSSLNHQT.

Interacts with MEE14/CBP1.

The protein localises to the nucleus. Its function is as follows. Probable transcription factor that may function in the maintenance of the proper function of the central cell in pollen tube attraction. The chain is Agamous-like MADS-box protein AGL81 from Arabidopsis thaliana (Mouse-ear cress).